Consider the following 473-residue polypeptide: Photosystem II CP43 reaction center protein (473 aa).

A propeptide spanning residues 1–14 is cleaved from the precursor; that stretch reads MKTLYSLRRSYPVE. At Thr-15 the chain carries N-acetylthreonine. Thr-15 bears the Phosphothreonine mark. Transmembrane regions (helical) follow at residues 69–93, 134–155, 178–200, 255–275, and 291–312; these read LFEVAHFVPEKPMYEQGLILLPHLA, LIGPETLEESFPFFGYVWKDRN, KALYFGGVYDTWAPGGGDVRKIT, KPFAWARRAFVWSGEAYLSYS, and WFNNTVYPSEFYGPTGPEASQA. Glu-367 provides a ligand contact to [CaMn4O5] cluster. The chain crosses the membrane as a helical span at residues 447–471; that stretch reads RARAAAAGFEKGIDRDFEPVLSMTP.

Belongs to the PsbB/PsbC family. PsbC subfamily. PSII is composed of 1 copy each of membrane proteins PsbA, PsbB, PsbC, PsbD, PsbE, PsbF, PsbH, PsbI, PsbJ, PsbK, PsbL, PsbM, PsbT, PsbX, PsbY, PsbZ, Psb30/Ycf12, at least 3 peripheral proteins of the oxygen-evolving complex and a large number of cofactors. It forms dimeric complexes. Binds multiple chlorophylls and provides some of the ligands for the Ca-4Mn-5O cluster of the oxygen-evolving complex. It may also provide a ligand for a Cl- that is required for oxygen evolution. PSII binds additional chlorophylls, carotenoids and specific lipids. is required as a cofactor.

It is found in the plastid. The protein resides in the chloroplast thylakoid membrane. Its function is as follows. One of the components of the core complex of photosystem II (PSII). It binds chlorophyll and helps catalyze the primary light-induced photochemical processes of PSII. PSII is a light-driven water:plastoquinone oxidoreductase, using light energy to abstract electrons from H(2)O, generating O(2) and a proton gradient subsequently used for ATP formation. In Pinus thunbergii (Japanese black pine), this protein is Photosystem II CP43 reaction center protein.